Reading from the N-terminus, the 210-residue chain is Methylthioribulose-1-phosphate dehydratase (210 aa).

Zn(2+)-binding residues include His97 and His99.

Belongs to the aldolase class II family. MtnB subfamily. As to quaternary structure, homotetramer. It depends on Zn(2+) as a cofactor.

The catalysed reaction is 5-(methylsulfanyl)-D-ribulose 1-phosphate = 5-methylsulfanyl-2,3-dioxopentyl phosphate + H2O. It functions in the pathway amino-acid biosynthesis; L-methionine biosynthesis via salvage pathway; L-methionine from S-methyl-5-thio-alpha-D-ribose 1-phosphate: step 2/6. In terms of biological role, catalyzes the dehydration of methylthioribulose-1-phosphate (MTRu-1-P) into 2,3-diketo-5-methylthiopentyl-1-phosphate (DK-MTP-1-P). The sequence is that of Methylthioribulose-1-phosphate dehydratase from Geobacillus kaustophilus (strain HTA426).